A 221-amino-acid chain; its full sequence is Serine/arginine-rich splicing factor 2 (221 aa).

In terms of domain architecture, RRM spans 14 to 92; that stretch reads TSLKVDNLTY…RELRVQMARY (79 aa). The disordered stretch occupies residues 91-221; sequence RYGRPPDSHH…SPEEEGAVSS (131 aa). Basic residues-rich tracts occupy residues 117 to 171 and 179 to 189; these read RRSR…RSKS and SRSRSRSRSRS.

Belongs to the splicing factor SR family. Post-translationally, extensively phosphorylated on serine residues in the RS domain.

It is found in the nucleus. Functionally, necessary for the splicing of pre-mRNA. It is required for formation of the earliest ATP-dependent splicing complex and interacts with spliceosomal components bound to both the 5'- and 3'-splice sites during spliceosome assembly. It also is required for ATP-dependent interactions of both U1 and U2 snRNPs with pre-mRNA. The protein is Serine/arginine-rich splicing factor 2 (SRSF2) of Gallus gallus (Chicken).